The primary structure comprises 210 residues: Probable HTH-type transcriptional regulator ArpR (210 aa).

The region spanning 10 to 70 is the HTH tetR-type domain; the sequence is QETRAQIIEA…ALLDSLHETH (61 aa). The H-T-H motif DNA-binding region spans 33–52; that stretch reads TLADIAELAGVTRGAIYWHF.

Its function is as follows. Probable regulatory protein for the antibiotic efflux pump arpABC operon. May function as a repressor. The protein is Probable HTH-type transcriptional regulator ArpR (arpR) of Pseudomonas putida (Arthrobacter siderocapsulatus).